A 344-amino-acid polypeptide reads, in one-letter code: Glyceraldehyde-3-phosphate dehydrogenase (344 aa).

Residues 11–12 (TI) and G110 each bind NAD(+). D-glyceraldehyde 3-phosphate is bound at residue 139 to 141 (SCN). C140 acts as the Nucleophile in catalysis. An NAD(+)-binding site is contributed by R169. Residue 195-196 (HG) participates in D-glyceraldehyde 3-phosphate binding. Q302 serves as a coordination point for NAD(+).

This sequence belongs to the glyceraldehyde-3-phosphate dehydrogenase family. As to quaternary structure, homotetramer.

Its subcellular location is the cytoplasm. It carries out the reaction D-glyceraldehyde 3-phosphate + phosphate + NADP(+) = (2R)-3-phospho-glyceroyl phosphate + NADPH + H(+). It catalyses the reaction D-glyceraldehyde 3-phosphate + phosphate + NAD(+) = (2R)-3-phospho-glyceroyl phosphate + NADH + H(+). The protein operates within carbohydrate degradation; glycolysis; pyruvate from D-glyceraldehyde 3-phosphate: step 1/5. The polypeptide is Glyceraldehyde-3-phosphate dehydrogenase (Pyrobaculum neutrophilum (strain DSM 2338 / JCM 9278 / NBRC 100436 / V24Sta) (Thermoproteus neutrophilus)).